We begin with the raw amino-acid sequence, 136 residues long: Large ribosomal subunit protein uL16 (136 aa).

This sequence belongs to the universal ribosomal protein uL16 family. As to quaternary structure, part of the 50S ribosomal subunit.

Binds 23S rRNA and is also seen to make contacts with the A and possibly P site tRNAs. The sequence is that of Large ribosomal subunit protein uL16 from Salmonella agona (strain SL483).